A 197-amino-acid polypeptide reads, in one-letter code: Holliday junction resolvase RecU (197 aa).

Mg(2+) contacts are provided by T82, D84, E97, and Q116.

Belongs to the RecU family. The cofactor is Mg(2+).

The protein localises to the cytoplasm. It catalyses the reaction Endonucleolytic cleavage at a junction such as a reciprocal single-stranded crossover between two homologous DNA duplexes (Holliday junction).. Functionally, endonuclease that resolves Holliday junction intermediates in genetic recombination. Cleaves mobile four-strand junctions by introducing symmetrical nicks in paired strands. Promotes annealing of linear ssDNA with homologous dsDNA. Required for DNA repair, homologous recombination and chromosome segregation. The polypeptide is Holliday junction resolvase RecU (Streptococcus mutans serotype c (strain ATCC 700610 / UA159)).